Here is a 215-residue protein sequence, read N- to C-terminus: Cytidylate kinase (215 aa).

An ATP-binding site is contributed by 10–18 (GPAASGKGT).

It belongs to the cytidylate kinase family. Type 1 subfamily.

The protein resides in the cytoplasm. It catalyses the reaction CMP + ATP = CDP + ADP. It carries out the reaction dCMP + ATP = dCDP + ADP. This Bartonella henselae (strain ATCC 49882 / DSM 28221 / CCUG 30454 / Houston 1) (Rochalimaea henselae) protein is Cytidylate kinase.